The following is a 140-amino-acid chain: Large ribosomal subunit protein bL17 (140 aa).

Belongs to the bacterial ribosomal protein bL17 family. Part of the 50S ribosomal subunit. Contacts protein L32.

This is Large ribosomal subunit protein bL17 from Paracoccus denitrificans (strain Pd 1222).